Consider the following 234-residue polypeptide: N-(5'-phosphoribosyl)anthranilate isomerase (234 aa).

Positions 211 to 234 (RAASSSPRPVDGESPAFQRSEKAG) are disordered.

It belongs to the TrpF family.

It catalyses the reaction N-(5-phospho-beta-D-ribosyl)anthranilate = 1-(2-carboxyphenylamino)-1-deoxy-D-ribulose 5-phosphate. The protein operates within amino-acid biosynthesis; L-tryptophan biosynthesis; L-tryptophan from chorismate: step 3/5. In Afipia carboxidovorans (strain ATCC 49405 / DSM 1227 / KCTC 32145 / OM5) (Oligotropha carboxidovorans), this protein is N-(5'-phosphoribosyl)anthranilate isomerase.